The primary structure comprises 130 residues: Large ribosomal subunit protein bL17 (130 aa).

Belongs to the bacterial ribosomal protein bL17 family. Part of the 50S ribosomal subunit. Contacts protein L32.

This Buchnera aphidicola subsp. Acyrthosiphon pisum (strain APS) (Acyrthosiphon pisum symbiotic bacterium) protein is Large ribosomal subunit protein bL17.